Reading from the N-terminus, the 485-residue chain is NADH-quinone oxidoreductase subunit N (485 aa).

14 consecutive transmembrane segments (helical) span residues 8–28, 35–55, 71–91, 105–125, 127–147, 159–179, 203–223, 235–255, 271–291, 297–317, 326–346, 373–393, 408–430, and 455–475; these read LIAL…MLSI, FLNA…LWFV, GFAM…CTFA, FYLL…ANHL, SLFL…GYAF, YTIL…LVYA, LLAG…LVPF, PAPV…GVVM, VVLA…ALSQ, LLGY…IALQ, VGVY…VVSL, AAVM…LGFI, WWLV…RVAV, and IVVL…QPLI.

It belongs to the complex I subunit 2 family. As to quaternary structure, NDH-1 is composed of 13 different subunits. Subunits NuoA, H, J, K, L, M, N constitute the membrane sector of the complex.

It is found in the cell inner membrane. The enzyme catalyses a quinone + NADH + 5 H(+)(in) = a quinol + NAD(+) + 4 H(+)(out). Functionally, NDH-1 shuttles electrons from NADH, via FMN and iron-sulfur (Fe-S) centers, to quinones in the respiratory chain. The immediate electron acceptor for the enzyme in this species is believed to be ubiquinone. Couples the redox reaction to proton translocation (for every two electrons transferred, four hydrogen ions are translocated across the cytoplasmic membrane), and thus conserves the redox energy in a proton gradient. The sequence is that of NADH-quinone oxidoreductase subunit N from Escherichia coli O6:K15:H31 (strain 536 / UPEC).